The chain runs to 264 residues: uncharacterized protein (264 aa).

15–22 (KGGTGKTT) contributes to the ATP binding site.

This sequence belongs to the ParA family. MinD subfamily.

This is an uncharacterized protein from Methanocaldococcus jannaschii (strain ATCC 43067 / DSM 2661 / JAL-1 / JCM 10045 / NBRC 100440) (Methanococcus jannaschii).